The chain runs to 418 residues: Endoglucanase EG-II (418 aa).

Residues 1-21 (MNKSVAPLLLAASILYGGAAA) form the signal peptide. Gln-22 is subject to Pyrrolidone carboxylic acid. Positions 22-57 (QQTVWGQCGGIGWSGPTNCAPGSACSTLNPYYAQCI) constitute a CBM1 domain. The interval 58-91 (PGATTITTSTRPPSGPTTTTRATSTSSSTPPTSS) is linker. Positions 63–91 (ITTSTRPPSGPTTTTRATSTSSSTPPTSS) are disordered. A catalytic region spans residues 92–418 (GVRFAGVNIA…SLVSSCLARK (327 aa)). An intrachain disulfide couples Cys-107 to Cys-113. Asn-124 is a glycosylation site (N-linked (GlcNAc) asparagine). A disulfide bridge connects residues Cys-183 and Cys-190. Glu-239 (proton donor/acceptor) is an active-site residue. Cystine bridges form between Cys-323–Cys-359 and Cys-364–Cys-414. Glu-350 acts as the Nucleophile in catalysis.

Belongs to the glycosyl hydrolase 5 (cellulase A) family.

The protein localises to the secreted. The enzyme catalyses Endohydrolysis of (1-&gt;4)-beta-D-glucosidic linkages in cellulose, lichenin and cereal beta-D-glucans.. Endoglucanase (EG) that cleaves the internal beta-1,4-glucosidic bonds in cellulose. The degradation of cellulose involves an interplay between different cellulolytic enzymes. Hydrolysis starts with EGs, which cut internal glycosidic linkages to reduce the polymerization degree of the substrate and creates new chain ends for exocellobiohydrolases (CBHs). The CBH release the disaccharide cellobiose from the non-reducing end of the cellulose polymer chain. Finally, beta-1,4-glucosidases hydrolyze the cellobiose and other short cello-oligosaccharides into glucose units. The chain is Endoglucanase EG-II (egl2) from Hypocrea jecorina (strain ATCC 56765 / BCRC 32924 / NRRL 11460 / Rut C-30) (Trichoderma reesei).